A 1024-amino-acid polypeptide reads, in one-letter code: Myosin phosphatase Rho-interacting protein (1024 aa).

Residues 1-382 form an interaction with F-actin region; sequence MSAAKENPCR…DRRSTESSMT (382 aa). The 108-residue stretch at 43–150 folds into the PH 1 domain; the sequence is KPIYGGWLLL…WLEMLMVYPR (108 aa). The tract at residues 152-262 is disordered; the sequence is NKQNQKKKRK…GDRVDGGRKV (111 aa). Low complexity predominate over residues 179 to 190; the sequence is SSSGGSSGSSSS. Phosphoserine is present on residues serine 193, serine 219, serine 221, serine 225, and serine 227. Positions 221 to 233 are enriched in low complexity; it reads SPAQSPSQSQPPA. Positions 240 to 262 are enriched in basic and acidic residues; it reads PGLESKEDESTISGDRVDGGRKV. A phosphoserine mark is found at serine 266, serine 270, serine 289, and serine 292. Disordered regions lie at residues 274–301 and 328–379; these read AKQDLRAEEQLPPLLSPPSPSTPHSRRS and PSSD…STES. A Phosphothreonine modification is found at threonine 295. The span at 333 to 349 shows a compositional bias: basic and acidic residues; that stretch reads RQGRSERRAIPRKRDFA. Serine 364 is subject to Phosphoserine. The PH 2 domain occupies 386–482; sequence LNFKKGWLTK…WIQTIMKHVL (97 aa). Positions 486–583 are disordered; that stretch reads APDVTSSLPE…AEPGELERER (98 aa). Residues 488–508 are compositionally biased toward polar residues; sequence DVTSSLPEGKNKSTSFETCSR. Phosphoserine is present on serine 492. A compositionally biased stretch (basic and acidic residues) spans 522-545; that stretch reads PEQKKSRARERRREGRSKTFDWAE. The tract at residues 545 to 823 is interaction with RHOA; it reads EFRPIQQALA…SVQRELEVLS (279 aa). Serine 617 carries the post-translational modification Phosphoserine. Position 645 is a phosphothreonine (threonine 645). The stretch at 672-976 forms a coiled coil; it reads HELTSLLEKE…AATEALGEKS (305 aa). Position 799 is a phosphoserine (serine 799). The interval 823–878 is interaction with PPP1R12A; that stretch reads SEQYSQKCLENAHLAQALEAERQALRQCQRENQELNAHNQELNNRLAAEITRLRTL. Residues 972-995 form a disordered region; it reads LGEKSPEGTTVSGYDIMKSKSNPD. Residues serine 976, glycine 979, serine 992, serine 1013, and serine 1015 each carry the phosphoserine modification.

In terms of assembly, binds RHOA, PPP1R12A/MBS and PPP1R12C/MBS85 through adjacent coiled coil domains. Interacts with MYZAP. Binds F-actin through its N-terminus. In terms of tissue distribution, expressed in Kidney, Brain, Heart and Lung.

Its subcellular location is the cytoplasm. It is found in the cytoskeleton. In terms of biological role, targets myosin phosphatase to the actin cytoskeleton. Required for the regulation of the actin cytoskeleton by RhoA and ROCK1. Depletion leads to an increased number of stress fibers in smooth muscle cells through stabilization of actin fibers by phosphorylated myosin. Overexpression of MRIP as well as its F-actin-binding region leads to disassembly of stress fibers in neuronal cells. The protein is Myosin phosphatase Rho-interacting protein (Mprip) of Mus musculus (Mouse).